Reading from the N-terminus, the 304-residue chain is Myelin basic protein (304 aa).

2 stretches are compositionally biased toward basic and acidic residues: residues 1-12 and 22-32; these read MGNHAGKRELNA and NRGESEKKRNL. The interval 1–146 is disordered; sequence MGNHAGKREL…QKRPSQRHGS (146 aa). An N-acetylalanine modification is found at glycine 2. Positions 51–65 are enriched in polar residues; that stretch reads ANQNNGTSSQDTAVT. Over residues 95–113 the composition is skewed to basic and acidic residues; it reads FSRDAPGREDNTFKDRPSE. Residue serine 96 is modified to Phosphoserine. Over residues 117–130 the composition is skewed to polar residues; that stretch reads LQTIQEDSAATSES. Phosphoserine is present on residues serine 141 and serine 146. Tyrosine 148 is modified (phosphotyrosine). Threonine 151 is modified (phosphothreonine). Position 153 is a phosphoserine (serine 153). Phosphothreonine is present on threonine 154. 2 positions are modified to citrulline; in form C8: arginine 159 and arginine 165. Arginine 167 is subject to Citrulline. Threonine 169 bears the Phosphothreonine mark. Serine 174 is modified (phosphoserine). Omega-N-methylarginine is present on residues arginine 177 and arginine 183. The induces experimental autoimmune encephalomyelitis (EAE) 1 stretch occupies residues 179 to 222; the sequence is FGGDRGAPKRGSGKDSHHPARTAHYGSLPQKSHGRTQDENPVVH. The interval 180 to 249 is disordered; sequence GGDRGAPKRG…GRGLSLSRFS (70 aa). Position 190 is a phosphoserine (serine 190). Arginine 199 carries the post-translational modification Citrulline. The residue at position 203 (tyrosine 203) is a Phosphotyrosine. Serine 210 carries the post-translational modification Phosphoserine. Threonine 214 and threonine 229 each carry phosphothreonine. Arginine 231 carries the citrulline modification. Threonine 232 is subject to Phosphothreonine. Position 237 is a deamidated glutamine (glutamine 237). At arginine 241 the chain carries Omega-N-methylarginine; alternate. The residue at position 241 (arginine 241) is a Symmetric dimethylarginine; alternate. The tract at residues 246 to 256 is induces experimental autoimmune encephalomyelitis (EAE) 2; it reads SRFSWGAEGQR. Serine 249 is modified (phosphoserine). Citrulline; in form C8 is present on residues arginine 256 and arginine 264. The residue at position 281 (glutamine 281) is a Deamidated glutamine. Arginine 293 is subject to Citrulline; in form C8. A Phosphoserine modification is found at serine 295. Citrulline is present on arginine 296. The residue at position 299 (serine 299) is a Phosphoserine; by UHMK1. A Citrulline modification is found at arginine 303. Arginine 304 carries the post-translational modification Citrulline; in form C8.

This sequence belongs to the myelin basic protein family. As to quaternary structure, homodimer. Isoform 3 exists as a homodimer. Post-translationally, several charge isomers of MBP; C1 (the most cationic, least modified, and most abundant form), C2, C3, C4, C5, C6, C7, C8-A and C8-B (the least cationic form); are produced as a result of optional PTM, such as phosphorylation, deamidation of glutamine or asparagine, arginine citrullination and methylation. C8-A and C8-B contain each two mass isoforms termed C8-A(H), C8-A(L), C8-B(H) and C8-B(L), (H) standing for higher and (L) for lower molecular weight. C3, C4 and C5 are phosphorylated. The ratio of methylated arginine residues decreases during aging, making the protein more cationic. The N-terminal alanine is acetylated (isoform 3, isoform 4, isoform 5 and isoform 6). In terms of processing, arg-241 was found to be 6% monomethylated and 60% symmetrically dimethylated. Post-translationally, proteolytically cleaved in B cell lysosomes by cathepsin CTSG which degrades the major immunogenic MBP epitope and prevents the activation of MBP-specific autoreactive T cells. Phosphorylated by TAOK2, VRK2, MAPK11, MAPK12, MAPK14 and MINK1. As to expression, MBP isoforms are found in both the central and the peripheral nervous system, whereas Golli-MBP isoforms are expressed in fetal thymus, spleen and spinal cord, as well as in cell lines derived from the immune system.

The protein localises to the myelin membrane. Its subcellular location is the nucleus. In terms of biological role, the classic group of MBP isoforms (isoform 4-isoform 14) are with PLP the most abundant protein components of the myelin membrane in the CNS. They have a role in both its formation and stabilization. The smaller isoforms might have an important role in remyelination of denuded axons in multiple sclerosis. The non-classic group of MBP isoforms (isoform 1-isoform 3/Golli-MBPs) may preferentially have a role in the early developing brain long before myelination, maybe as components of transcriptional complexes, and may also be involved in signaling pathways in T-cells and neural cells. Differential splicing events combined with optional post-translational modifications give a wide spectrum of isomers, with each of them potentially having a specialized function. Induces T-cell proliferation. The chain is Myelin basic protein (MBP) from Homo sapiens (Human).